The following is a 182-amino-acid chain: Ribosome-recycling factor (182 aa).

The protein belongs to the RRF family.

Its subcellular location is the cytoplasm. Its function is as follows. Responsible for the release of ribosomes from messenger RNA at the termination of protein biosynthesis. May increase the efficiency of translation by recycling ribosomes from one round of translation to another. The polypeptide is Ribosome-recycling factor (Synechococcus sp. (strain WH7803)).